Here is a 115-residue protein sequence, read N- to C-terminus: Succinate dehydrogenase assembly factor 3, mitochondrial (115 aa).

The protein belongs to the complex I LYR family. SDHAF3 subfamily. In terms of assembly, interacts with sdh2 within an sdh1-sdh2 subcomplex.

The protein localises to the mitochondrion matrix. Its function is as follows. Plays an essential role in the assembly of succinate dehydrogenase (SDH), an enzyme complex (also referred to as respiratory complex II) that is a component of both the tricarboxylic acid (TCA) cycle and the mitochondrial electron transport chain, and which couples the oxidation of succinate to fumarate with the reduction of ubiquinone (coenzyme Q) to ubiquinol. Promotes maturation of the iron-sulfur protein subunit sdh2 of the SDH catalytic dimer, protecting it from the deleterious effects of oxidants. May act together with SDHAF1. This Schizosaccharomyces pombe (strain 972 / ATCC 24843) (Fission yeast) protein is Succinate dehydrogenase assembly factor 3, mitochondrial.